The primary structure comprises 238 residues: N-(5'-phosphoribosyl)anthranilate isomerase (238 aa).

This sequence belongs to the TrpF family.

It catalyses the reaction N-(5-phospho-beta-D-ribosyl)anthranilate = 1-(2-carboxyphenylamino)-1-deoxy-D-ribulose 5-phosphate. It participates in amino-acid biosynthesis; L-tryptophan biosynthesis; L-tryptophan from chorismate: step 3/5. The polypeptide is N-(5'-phosphoribosyl)anthranilate isomerase (Methanosarcina acetivorans (strain ATCC 35395 / DSM 2834 / JCM 12185 / C2A)).